Reading from the N-terminus, the 480-residue chain is Glycogen synthase (480 aa).

K15 is an ADP-alpha-D-glucose binding site.

It belongs to the glycosyltransferase 1 family. Bacterial/plant glycogen synthase subfamily.

The catalysed reaction is [(1-&gt;4)-alpha-D-glucosyl](n) + ADP-alpha-D-glucose = [(1-&gt;4)-alpha-D-glucosyl](n+1) + ADP + H(+). It participates in glycan biosynthesis; glycogen biosynthesis. In terms of biological role, synthesizes alpha-1,4-glucan chains using ADP-glucose. This chain is Glycogen synthase, found in Granulibacter bethesdensis (strain ATCC BAA-1260 / CGDNIH1).